Reading from the N-terminus, the 101-residue chain is NAD(P)H-quinone oxidoreductase subunit 4L, chloroplastic (101 aa).

A run of 3 helical transmembrane segments spans residues 2–22 (MLEH…YGLI), 32–52 (MCLE…SDFF), and 61–81 (IFSI…LAIV).

It belongs to the complex I subunit 4L family. NDH is composed of at least 16 different subunits, 5 of which are encoded in the nucleus.

The protein resides in the plastid. It is found in the chloroplast thylakoid membrane. It carries out the reaction a plastoquinone + NADH + (n+1) H(+)(in) = a plastoquinol + NAD(+) + n H(+)(out). The catalysed reaction is a plastoquinone + NADPH + (n+1) H(+)(in) = a plastoquinol + NADP(+) + n H(+)(out). In terms of biological role, NDH shuttles electrons from NAD(P)H:plastoquinone, via FMN and iron-sulfur (Fe-S) centers, to quinones in the photosynthetic chain and possibly in a chloroplast respiratory chain. The immediate electron acceptor for the enzyme in this species is believed to be plastoquinone. Couples the redox reaction to proton translocation, and thus conserves the redox energy in a proton gradient. This is NAD(P)H-quinone oxidoreductase subunit 4L, chloroplastic from Helianthus annuus (Common sunflower).